A 417-amino-acid polypeptide reads, in one-letter code: Serine--tRNA ligase (417 aa).

232–234 (TAE) lines the L-serine pocket. An ATP-binding site is contributed by 263 to 265 (RKE). L-serine is bound at residue E286. 350–353 (EISS) serves as a coordination point for ATP. S385 lines the L-serine pocket.

Belongs to the class-II aminoacyl-tRNA synthetase family. Type-1 seryl-tRNA synthetase subfamily. In terms of assembly, homodimer. The tRNA molecule binds across the dimer.

The protein resides in the cytoplasm. The enzyme catalyses tRNA(Ser) + L-serine + ATP = L-seryl-tRNA(Ser) + AMP + diphosphate + H(+). It catalyses the reaction tRNA(Sec) + L-serine + ATP = L-seryl-tRNA(Sec) + AMP + diphosphate + H(+). It participates in aminoacyl-tRNA biosynthesis; selenocysteinyl-tRNA(Sec) biosynthesis; L-seryl-tRNA(Sec) from L-serine and tRNA(Sec): step 1/1. In terms of biological role, catalyzes the attachment of serine to tRNA(Ser). Is also able to aminoacylate tRNA(Sec) with serine, to form the misacylated tRNA L-seryl-tRNA(Sec), which will be further converted into selenocysteinyl-tRNA(Sec). This Sulfurihydrogenibium sp. (strain YO3AOP1) protein is Serine--tRNA ligase.